We begin with the raw amino-acid sequence, 179 residues long: Inosine/xanthosine triphosphatase (179 aa).

Residues 8–13 and 68–69 contribute to the substrate site; these read TTNPAK and EA. Glu-68 serves as a coordination point for Mg(2+).

Belongs to the YjjX NTPase family. In terms of assembly, homodimer. Mg(2+) serves as cofactor. The cofactor is Mn(2+).

The enzyme catalyses XTP + H2O = XDP + phosphate + H(+). It catalyses the reaction ITP + H2O = IDP + phosphate + H(+). Phosphatase that hydrolyzes non-canonical purine nucleotides such as XTP and ITP to their respective diphosphate derivatives. Probably excludes non-canonical purines from DNA/RNA precursor pool, thus preventing their incorporation into DNA/RNA and avoiding chromosomal lesions. The protein is Inosine/xanthosine triphosphatase of Serratia proteamaculans (strain 568).